We begin with the raw amino-acid sequence, 327 residues long: Putative cyclin-dependent kinase F-2 (327 aa).

The Protein kinase domain occupies 4–295; the sequence is YECLGKIGEG…AADALRCAWF (292 aa). Residues 10–18 and Lys33 contribute to the ATP site; that span reads IGEGAAGVV. Asp134 acts as the Proton acceptor in catalysis. A Phosphothreonine modification is found at Thr167.

The protein belongs to the protein kinase superfamily. CMGC Ser/Thr protein kinase family. CDC2/CDKX subfamily.

The enzyme catalyses L-seryl-[protein] + ATP = O-phospho-L-seryl-[protein] + ADP + H(+). It catalyses the reaction L-threonyl-[protein] + ATP = O-phospho-L-threonyl-[protein] + ADP + H(+). It carries out the reaction [DNA-directed RNA polymerase] + ATP = phospho-[DNA-directed RNA polymerase] + ADP + H(+). This is Putative cyclin-dependent kinase F-2 (CDKF-2) from Oryza sativa subsp. japonica (Rice).